The following is a 284-amino-acid chain: MLSKQIPLGIYEKALPAGECWLERLRLAKTLGFDFVEMSVDETDERLSRLDWSREQRLALVNAIVETGVRVPSMCLSAHRRFPLGSEDDAVRAQGLEIMRKAIQFAQDVGIRVIQLAGYDVYYQEANNETRRRFRDGLKESVEMASRAQVTLAMEIMDYPLMNSISKALGYAHYLNNPWFQLYPDIGNLSAWDNDVQMELQAGIGHIVAVHVKDTKPGVFKNVPFGEGVVDFERCFETLKQSGYCGPYLIEMWSETAEDPAAEVVKARDWVKARMAKAGTVEAA.

Belongs to the L-ribulose-5-phosphate 3-epimerase family.

The catalysed reaction is L-ribulose 5-phosphate = L-xylulose 5-phosphate. The protein operates within cofactor degradation; L-ascorbate degradation; D-xylulose 5-phosphate from L-ascorbate: step 3/4. In terms of biological role, catalyzes the isomerization of L-xylulose-5-phosphate to L-ribulose-5-phosphate. Is involved in the anaerobic L-ascorbate utilization. The protein is L-ribulose-5-phosphate 3-epimerase UlaE of Shigella sonnei (strain Ss046).